Reading from the N-terminus, the 354-residue chain is Glycine betaine/proline betaine transport system permease protein ProW (354 aa).

Residues 1-28 (MADQTNPWDTAQVADTTTQTADAWGTPA) are disordered. At 1–99 (MADQTNPWDT…VDYILNGFQQ (99 aa)) the chain is on the cytoplasmic side. Residues 9-23 (DTAQVADTTTQTADA) show a composition bias toward low complexity. The helical transmembrane segment at 100–120 (LLLGMPAPVAIILFALIAWQV) threads the bilayer. Residue Ser121 is a topological domain, periplasmic. Residues 122–142 (GVGMGIATLISLIAIGAIGAW) form a helical membrane-spanning segment. Residues 143-148 (SQAMIT) are Cytoplasmic-facing. The ABC transmembrane type-1 domain occupies 145-324 (AMITLALVLT…ILAIILDRLT (180 aa)). Residues 149 to 169 (LALVLTALLFCVVIGLPMGIW) form a helical membrane-spanning segment. The Periplasmic segment spans residues 170-198 (LARSPRAAKIVRPLLDAMQTTPAFVYLVP). The helical transmembrane segment at 199–219 (IVMLFGIGNVPGVVVTIIFAL) threads the bilayer. Residues 220–270 (PPIVRLTILGINQVPADLIEASRSFGASPRQMLFKVQLPLAMPTIMAGVNQ) are Cytoplasmic-facing. The helical transmembrane segment at 271 to 291 (TLMLALSMVVIASMIAVGGLG) threads the bilayer. Residues 292–300 (QMVLRGIGR) are Periplasmic-facing. A helical membrane pass occupies residues 301–321 (LDMGLATVGGVGIVILAIILD). Over 322–354 (RLTQAVGRDSRSRGNRRWYTTGPVGLITRPFVK) the chain is Cytoplasmic.

It belongs to the binding-protein-dependent transport system permease family. CysTW subfamily. The complex is composed of two ATP-binding proteins (ProV), two transmembrane proteins (ProW) and a solute-binding protein (ProX).

It is found in the cell inner membrane. Part of the ProU ABC transporter complex involved in glycine betaine and proline betaine uptake. Probably responsible for the translocation of the substrate across the membrane. In Salmonella typhimurium (strain LT2 / SGSC1412 / ATCC 700720), this protein is Glycine betaine/proline betaine transport system permease protein ProW.